The primary structure comprises 879 residues: Alanine--tRNA ligase (879 aa).

His-566, His-570, Cys-668, and His-672 together coordinate Zn(2+).

Belongs to the class-II aminoacyl-tRNA synthetase family. Zn(2+) is required as a cofactor.

The protein localises to the cytoplasm. The enzyme catalyses tRNA(Ala) + L-alanine + ATP = L-alanyl-tRNA(Ala) + AMP + diphosphate. Catalyzes the attachment of alanine to tRNA(Ala) in a two-step reaction: alanine is first activated by ATP to form Ala-AMP and then transferred to the acceptor end of tRNA(Ala). Also edits incorrectly charged Ser-tRNA(Ala) and Gly-tRNA(Ala) via its editing domain. The chain is Alanine--tRNA ligase from Clostridium botulinum (strain Loch Maree / Type A3).